Consider the following 202-residue polypeptide: Keratin-associated protein 5-10 (202 aa).

Repeat copies occupy residues 48–51 (CCKP), 54–57 (CCVP), 144–147 (CCKP), 162–165 (CCNP), 172–175 (CCVP), 182–185 (CCKP), and 192–195 (CCVP). The tract at residues 48–195 (CCKPVCCCVP…CCCQSSCCVP (148 aa)) is 7 X 4 AA repeats of C-C-X-P.

This sequence belongs to the KRTAP type 5 family. Interacts with hair keratins. Expressed in hair root but not in skin. Expressed also in brain and skeletal muscle.

In terms of biological role, in the hair cortex, hair keratin intermediate filaments are embedded in an interfilamentous matrix, consisting of hair keratin-associated protein (KRTAP), which are essential for the formation of a rigid and resistant hair shaft through their extensive disulfide bond cross-linking with abundant cysteine residues of hair keratins. The matrix proteins include the high-sulfur and high-glycine-tyrosine keratins. This Homo sapiens (Human) protein is Keratin-associated protein 5-10 (KRTAP5-10).